Consider the following 342-residue polypeptide: Glycerol-1-phosphate dehydrogenase [NAD(P)+] (342 aa).

Residues 84-88 (GRPID) and 106-109 (TAAS) each bind NAD(+). A substrate-binding site is contributed by Asp-111. NAD(+) is bound at residue Ser-115. Asp-160 is a binding site for substrate. The Zn(2+) site is built by Asp-160 and His-241. His-245 serves as a coordination point for substrate. His-260 contacts Zn(2+).

It belongs to the glycerol-1-phosphate dehydrogenase family. Homodimer. The cofactor is Zn(2+).

It localises to the cytoplasm. It catalyses the reaction sn-glycerol 1-phosphate + NAD(+) = dihydroxyacetone phosphate + NADH + H(+). The catalysed reaction is sn-glycerol 1-phosphate + NADP(+) = dihydroxyacetone phosphate + NADPH + H(+). Its pathway is membrane lipid metabolism; glycerophospholipid metabolism. Its function is as follows. Catalyzes the NAD(P)H-dependent reduction of dihydroxyacetonephosphate (DHAP or glycerone phosphate) to glycerol 1-phosphate (G1P). The G1P thus generated is used as the glycerophosphate backbone of phospholipids in the cellular membranes of Archaea. The chain is Glycerol-1-phosphate dehydrogenase [NAD(P)+] from Pyrobaculum aerophilum (strain ATCC 51768 / DSM 7523 / JCM 9630 / CIP 104966 / NBRC 100827 / IM2).